A 597-amino-acid chain; its full sequence is Miltiradiene synthase KSL2, chloroplastic (597 aa).

The transit peptide at 1-51 (MSLAFNLRAIPFSGHTIQSRRGLFPVHESPMITTKPFVAVKCSLTTSTDLM) directs the protein to the chloroplast. Mg(2+) contacts are provided by Asp-329, Asp-333, Asn-473, and Glu-481. Residues 329–333 (DDFFD) carry the DDXXD motif motif.

This sequence belongs to the terpene synthase family. Requires Mg(2+) as cofactor.

The protein localises to the plastid. The protein resides in the chloroplast. It catalyses the reaction (+)-copalyl diphosphate = miltiradiene + diphosphate. It functions in the pathway secondary metabolite biosynthesis; terpenoid biosynthesis. Involved in the biosynthesis of ent-kaurene diterpenoids natural products such as oridonin, miltiradiene, eriocalyxin B and nezukol, known to exhibit antitumor, anti-inflammatory and antibacterial activities. Catalyzes the conversion of (+)-copalyl diphosphate ((+)-CPP) to miltiradiene. In Isodon japonicus (Scutellaria japonica), this protein is Miltiradiene synthase KSL2, chloroplastic.